Here is a 993-residue protein sequence, read N- to C-terminus: Protein translocase subunit SecA (993 aa).

Residues glutamine 102, 120–124 (GEGKT), and aspartate 523 each bind ATP. Positions 910–962 (ENAPEPQISGGNGQQPPQRRQQTSLDDLEKQFERKKKRELEQARMAGGGMPDA) are disordered. Basic and acidic residues predominate over residues 936 to 951 (DLEKQFERKKKRELEQ). Cysteine 979, cysteine 981, cysteine 990, and histidine 991 together coordinate Zn(2+).

It belongs to the SecA family. As to quaternary structure, monomer and homodimer. Part of the essential Sec protein translocation apparatus which comprises SecA, SecYEG and auxiliary proteins SecDF. Other proteins may also be involved. Zn(2+) serves as cofactor.

Its subcellular location is the cell inner membrane. It localises to the cytoplasm. The catalysed reaction is ATP + H2O + cellular proteinSide 1 = ADP + phosphate + cellular proteinSide 2.. Functionally, part of the Sec protein translocase complex. Interacts with the SecYEG preprotein conducting channel. Has a central role in coupling the hydrolysis of ATP to the transfer of proteins into and across the cell membrane, serving as an ATP-driven molecular motor driving the stepwise translocation of polypeptide chains across the membrane. This chain is Protein translocase subunit SecA, found in Koribacter versatilis (strain Ellin345).